Here is a 476-residue protein sequence, read N- to C-terminus: MYLYNTLTGRKEEFTPVEPGRVRMYVCGPTTYNYIHLGNARPMVVFDTLRRYLEYRNYDVLYVQNFTDIDDKVINRAREEHQAPLVIAERYIEEFFKDADALNVKRATLYPRVSQHIDAIIAAIATLVERGFAYVADGDVYFEVEKFPAYGRLSKRTPGEMRAGARVEVNTSKRNPLDFALWKAACPGEPSWESPWGPGRPGWHIECSTMALKYLGPGFDIHGGGADLIFPHHENEIAQAEAQTGCTFARFWLHNGFITVNQEKMSKSKGNFFLVRDILKRFRPLAVRLYLLATHYRSPIDFDDAGLLAAERGLERLENTRRLLGEARCQLTGTGAETTVPARTSALAGRAEELRQEFISAMDDDFNTARALAALYDLAREINSYLNGTTTIDPAALRTAAITFEQLGGEVLGLFGQARQQVDDELLSGLMDLILQVRQEARQRRDWATADTIRDRLKELGIVLEDTPRGPRWKRS.

Position 27 (cysteine 27) interacts with Zn(2+). The 'HIGH' region signature appears at 29–39 (PTTYNYIHLGN). Cysteine 207, histidine 232, and glutamate 236 together coordinate Zn(2+). The 'KMSKS' region motif lies at 264-268 (KMSKS). Lysine 267 provides a ligand contact to ATP.

The protein belongs to the class-I aminoacyl-tRNA synthetase family. As to quaternary structure, monomer. It depends on Zn(2+) as a cofactor.

It is found in the cytoplasm. The catalysed reaction is tRNA(Cys) + L-cysteine + ATP = L-cysteinyl-tRNA(Cys) + AMP + diphosphate. The sequence is that of Cysteine--tRNA ligase from Moorella thermoacetica (strain ATCC 39073 / JCM 9320).